We begin with the raw amino-acid sequence, 105 residues long: Putative pterin-4-alpha-carbinolamine dehydratase (105 aa).

The protein belongs to the pterin-4-alpha-carbinolamine dehydratase family.

It catalyses the reaction (4aS,6R)-4a-hydroxy-L-erythro-5,6,7,8-tetrahydrobiopterin = (6R)-L-erythro-6,7-dihydrobiopterin + H2O. The polypeptide is Putative pterin-4-alpha-carbinolamine dehydratase (Sinorhizobium fredii (strain NBRC 101917 / NGR234)).